A 378-amino-acid polypeptide reads, in one-letter code: Apolipoprotein A-IV (378 aa).

Residues 1 to 20 form the signal peptide; that stretch reads MFLKAVVLTLSLVAITGARA. 13 tandem repeats follow at residues 33–54, 60–81, 82–98, 110–130, 131–152, 153–174, 175–196, 197–218, 219–240, 241–262, 263–280, 281–302, and 303–324. Residues 33 to 324 are 13 X 22 AA approximate tandem repeats; that stretch reads DYFSQLSNNA…QVEELRQKLG (292 aa). A disordered region spans residues 354–378; the sequence is EKESQDTPVALPKQEQEQSAVPLES.

The protein belongs to the apolipoprotein A1/A4/E family. In terms of assembly, homodimer.

The protein resides in the secreted. Its function is as follows. May have a role in chylomicrons and VLDL secretion and catabolism. Required for efficient activation of lipoprotein lipase by ApoC-II; potent activator of LCAT. Apoa-IV is a major component of HDL and chylomicrons. This Canis lupus familiaris (Dog) protein is Apolipoprotein A-IV.